The sequence spans 532 residues: Tyrosine-protein kinase Src-1 (532 aa).

Residues 1–52 (MGATKSKPREGGPRSRSLDIVEGSHQPFTSLSASQTPNKSLDSHRPPAQPFG) are disordered. Residue Gly2 is the site of N-myristoyl glycine attachment. Basic and acidic residues predominate over residues 7 to 19 (KPREGGPRSRSLD). Residues 26–40 (QPFTSLSASQTPNKS) are compositionally biased toward polar residues. The SH3 domain occupies 80–141 (GGVTTFVALY…PSNYVAPSDS (62 aa)). The 98-residue stretch at 147-244 (WYLGKITRRE…GLCHRLTTVC (98 aa)) folds into the SH2 domain. The 254-residue stretch at 266-519 (LRLELKLGQG…YLQAFLEDYF (254 aa)) folds into the Protein kinase domain. Residues 272-280 (LGQGCFGEV) and Lys294 each bind ATP. The active-site Proton acceptor is Asp385. Tyr415 carries the post-translational modification Phosphotyrosine; by autocatalysis.

Belongs to the protein kinase superfamily. Tyr protein kinase family. SRC subfamily.

The protein resides in the cell membrane. It carries out the reaction L-tyrosyl-[protein] + ATP = O-phospho-L-tyrosyl-[protein] + ADP + H(+). In Xenopus laevis (African clawed frog), this protein is Tyrosine-protein kinase Src-1 (src-a).